Consider the following 555-residue polypeptide: Probable ferredoxin/ferredoxin--NADP reductase (555 aa).

2 4Fe-4S ferredoxin-type domains span residues 2–29 (PYIITQSCCNDGSCVFACPVNCIHPTPD) and 37–66 (EMLYIDPVACVDCGACVSACPVGAIASDTR). The [4Fe-4S] cluster site is built by cysteine 9, cysteine 15, cysteine 19, cysteine 46, cysteine 49, cysteine 52, and cysteine 56. The tract at residues 115 to 555 (VAIVGSGPAA…APPLRLRALS (441 aa)) is ferredoxin--NADP reductase. FAD-binding residues include alanine 123, glutamate 143, leucine 151, and isoleucine 187. Residues arginine 213, 258–261 (NGNV), 302–303 (RR), and glutamate 314 contribute to the NADP(+) site. FAD-binding positions include tryptophan 453 and 460–462 (GFI). Glycine 460 is an NADP(+) binding site.

In the C-terminal section; belongs to the ferredoxin--NADP reductase family. [4Fe-4S] cluster serves as cofactor. It depends on FAD as a cofactor.

It catalyses the reaction 2 reduced [2Fe-2S]-[ferredoxin] + NADP(+) + H(+) = 2 oxidized [2Fe-2S]-[ferredoxin] + NADPH. In Mycobacterium leprae (strain TN), this protein is Probable ferredoxin/ferredoxin--NADP reductase (fprB).